The chain runs to 109 residues: MGIDMSEEKEVKEIKVEIPKEIADKIEKITSFLNSLKDKKEMVSKEKIEEMLKLIDEVKDKLPKLNVDIEKLAKILEGSGSEVKIVFNKLTIDGEVGLKIIPLKKEKKE.

To A.fulgidus AF1885.

This is an uncharacterized protein from Methanocaldococcus jannaschii (strain ATCC 43067 / DSM 2661 / JAL-1 / JCM 10045 / NBRC 100440) (Methanococcus jannaschii).